We begin with the raw amino-acid sequence, 655 residues long: MTDKEEEAEGGKKKEPMIGFYDSYQELFEFFCNNTTIHGTIRMVCSKHNNMKTVSWTILFITTFGVMYWQFGLLLGQYYSYPVSITMSVNFDKLIFPAVTVCTLNPYRYNVVSTQLANLDCYTEELLSTLYHYNPLTSGNQSACNSSSTAGTRAFDESYMKLEFLNDENTAYSGPVKGATNSTSPVNHTEFYRIGFKLCNATGEDCFYQTYSSGVDALREWYKFQYINIMAQIPSQSNQEDDSQISNFVYACEFNKVSCGVENYTRFRHPVYGNCYTYNDGQSATPWASFVPGVGNGLSLVLRTEQNDFLPFLSTVAGARVLVHDQNQPPFMEDSGLDIRPGVETSIGMKKEIISRLGGVYGNCTDGSDIDVVNLYNSDYNQQACVRSCFQATIVQQCGCGYYFYPLPSGAEYCSYSRNKSWGYCYYKLYKAFAADELGCFRRCRKPCQYTDYKMTAGYAQWPSSVSESWITSILSQENQYNMTSGRKNIAKLNVYFYELNYQTMGESPSFTVVTLLSNMGSQWSLWFGSSVLSVVEMGELVFDLIAVGVIVLRRRRREKCQASSDGEGTSDSTAGTHRGQENASRSGRDVACNRFVVVAEISPPPAYDTLQLDVPVACAPDCECTQHVSHASVHSQAPCSSQPEQEASEGPTVL.

Residues Met-1–Ser-55 are Cytoplasmic-facing. The helical transmembrane segment at Trp-56 to Gly-76 threads the bilayer. Topologically, residues Gln-77–Ser-531 are extracellular. 10 disulfide bridges follow: Cys-102-Cys-275, Cys-199-Cys-206, Cys-252-Cys-259, Cys-364-Cys-448, Cys-385-Cys-425, Cys-385-Cys-444, Cys-389-Cys-440, Cys-398-Cys-425, Cys-398-Cys-448, and Cys-400-Cys-414. A helical transmembrane segment spans residues Val-532–Val-552. The Cytoplasmic portion of the chain corresponds to Leu-553–Leu-655. The segment at Cys-561–Ser-587 is disordered. Over residues Gln-562–Arg-586 the composition is skewed to polar residues.

This sequence belongs to the amiloride-sensitive sodium channel (TC 1.A.6) family. SCNN1A subfamily. In terms of assembly, heterotrimer; containing an alpha/SCNN1A, a beta/SCNN1B and a gamma/SCNN1G subunit. Strongly expressed in gill, kidney and rectum (at protein level). More weakly expressed in muscle, brain, heart, liver and intestine.

Its subcellular location is the apical cell membrane. It is found in the cell projection. It localises to the cilium. The protein localises to the cytoplasmic granule. The protein resides in the cytoplasm. Its subcellular location is the cytoplasmic vesicle. It is found in the secretory vesicle. It localises to the acrosome. The protein localises to the flagellum. It carries out the reaction Na(+)(in) = Na(+)(out). Its activity is regulated as follows. Originally identified and characterized by its inhibition by the diuretic drug amiloride. Functionally, this is one of the three pore-forming subunits of the heterotrimeric epithelial sodium channel (ENaC), a critical regulator of sodium balance and fluid homeostasis. ENaC operates in epithelial tissues, where it mediates the electrodiffusion of sodium ions from extracellular fluid through the apical membrane of cells, with water following osmotically. This Neoceratodus forsteri (Australian lungfish) protein is Epithelial sodium channel subunit alpha (scnn1a).